The primary structure comprises 78 residues: Dihydrofolate reductase type 2 (78 aa).

NADP(+) contacts are provided by residues 32–36 and 66–69; these read KKSGA and VQIY. Ile68 contacts substrate.

As to quaternary structure, homotetramer.

The catalysed reaction is (6S)-5,6,7,8-tetrahydrofolate + NADP(+) = 7,8-dihydrofolate + NADPH + H(+). It participates in cofactor biosynthesis; tetrahydrofolate biosynthesis; 5,6,7,8-tetrahydrofolate from 7,8-dihydrofolate: step 1/1. Functionally, key enzyme in folate metabolism. Catalyzes an essential reaction for de novo glycine and purine synthesis, and for DNA precursor synthesis. This chain is Dihydrofolate reductase type 2, found in Escherichia coli.